Here is a 502-residue protein sequence, read N- to C-terminus: Probable mRNA-splicing protein ubp10 (502 aa).

Residues 56–153 form a UBP-type; degenerate zinc finger; that stretch reads SQNLYLDTIN…YVMRPTFTKL (98 aa). Residues Cys89, Cys92, His108, and His114 each contribute to the Zn(2+) site. A USP domain is found at 178 to 501; it reads VGMNNIKNND…ESFIQLWERS (324 aa).

It belongs to the peptidase C19 family.

The protein resides in the nucleus. May play a role in mRNA splicing. It is unsure if the protein really exhibits hydrolase activity. Could be a competitor of ubiquitin C-terminal hydrolases (UCHs). The sequence is that of Probable mRNA-splicing protein ubp10 (ubp10) from Schizosaccharomyces pombe (strain 972 / ATCC 24843) (Fission yeast).